The primary structure comprises 774 residues: Shugoshin (774 aa).

Residues Ser-41–Leu-105 adopt a coiled-coil conformation. Disordered regions lie at residues Gly-106 to Arg-151, Ser-205 to Leu-661, and Cys-676 to Leu-774. Basic and acidic residues predominate over residues Pro-109–Tyr-120. The segment covering Ala-214 to Glu-224 has biased composition (acidic residues). Residues Gly-297–Glu-318 are compositionally biased toward polar residues. The span at Lys-382 to Val-398 shows a compositional bias: basic and acidic residues. The span at Glu-399–Phe-409 shows a compositional bias: polar residues. 2 stretches are compositionally biased toward basic and acidic residues: residues Asn-482–Phe-495 and Phe-549–Gln-558. Polar residues-rich tracts occupy residues Pro-595 to Asn-604 and Gln-640 to Thr-651. Residues Ala-706–Pro-722 are compositionally biased toward low complexity. Acidic residues predominate over residues Leu-743–Gly-754. Over residues Arg-765–Leu-774 the composition is skewed to basic residues.

It belongs to the shugoshin family.

The protein resides in the nucleus. It localises to the chromosome. The protein localises to the centromere. In terms of biological role, plays a central role in chromosome cohesion during cell division by preventing premature dissociation of cohesin complex from centromeres after prophase, when most of cohesin complex dissociates from chromosomes arms. In Neurospora crassa (strain ATCC 24698 / 74-OR23-1A / CBS 708.71 / DSM 1257 / FGSC 987), this protein is Shugoshin (sgo-1).